The sequence spans 72 residues: SRY-related protein MG42 (72 aa).

A DNA-binding region (HMG box) is located at residues 1–69 (VKRPMNAFMV…KHMADYPNYK (69 aa)).

The protein resides in the nucleus. The polypeptide is SRY-related protein MG42 (Tarentola mauritanica (Common wall gecko)).